Reading from the N-terminus, the 484-residue chain is Sulfoacetaldehyde dehydrogenase (484 aa).

NAD(+)-binding positions include 105–110, Gly-188, and Gly-206; that span reads LTPVTN. The Nucleophile role is filled by Cys-239. 2 residues coordinate NAD(+): Glu-332 and Leu-412.

Belongs to the aldehyde dehydrogenase family.

The catalysed reaction is sulfoacetaldehyde + NAD(+) + CoA = sulfoacetyl-CoA + NADH + H(+). Part of a variant of the sulfo-TK pathway, a D-sulfoquinovose degradation pathway that produces sulfoacetate. Catalyzes the oxidation of sulfoacetaldehyde (SA) to sulfoacetyl-coenzyme A (sulfoacetyl-CoA). Is highly specific for NAD(+), with only residual (1%) activity with NADP(+). Cannot use acetaldehyde. The protein is Sulfoacetaldehyde dehydrogenase of Acholeplasma sp.